Here is a 185-residue protein sequence, read N- to C-terminus: Ribosome-recycling factor (185 aa).

This sequence belongs to the RRF family.

It localises to the cytoplasm. Functionally, responsible for the release of ribosomes from messenger RNA at the termination of protein biosynthesis. May increase the efficiency of translation by recycling ribosomes from one round of translation to another. This is Ribosome-recycling factor from Thermosipho melanesiensis (strain DSM 12029 / CIP 104789 / BI429).